The primary structure comprises 613 residues: Probable inactive purple acid phosphatase 1 (613 aa).

Positions 1–24 (MRESLVAILVTVISVLGAIHQVKS) are cleaved as a signal peptide. Asn89 and Asn116 each carry an N-linked (GlcNAc...) asparagine glycan. Asp295 serves as a coordination point for Fe cation. A glycan (N-linked (GlcNAc...) asparagine) is linked at Asn316. Positions 336 and 339 each coordinate Fe cation. Residue Asp336 coordinates Zn(2+). Residues Asn369, His458, and His500 each contribute to the Zn(2+) site. Residue Asn369 participates in substrate binding. 500–502 (HAH) is a substrate binding site. His502 serves as a coordination point for Fe cation. N-linked (GlcNAc...) asparagine glycans are attached at residues Asn528 and Asn551.

The protein belongs to the metallophosphoesterase superfamily. Purple acid phosphatase family. As to quaternary structure, homodimer. Requires Fe cation as cofactor. Zn(2+) serves as cofactor. As to expression, expressed in roots, stems, leaves, flowers and siliques.

The protein resides in the secreted. The sequence is that of Probable inactive purple acid phosphatase 1 (PAP1) from Arabidopsis thaliana (Mouse-ear cress).